A 344-amino-acid chain; its full sequence is Cyclin-G2 (344 aa).

Residues 301–313 (ESESEDSCEDMSC) are compositionally biased toward acidic residues. The segment at 301-320 (ESESEDSCEDMSCGEESLSS) is disordered.

This sequence belongs to the cyclin family. Cyclin G subfamily. In terms of tissue distribution, high levels in cerebellum, thymus, spleen and prostate. Low levels in skeletal muscle.

The protein localises to the cytoplasm. Its function is as follows. May play a role in growth regulation and in negative regulation of cell cycle progression. The chain is Cyclin-G2 (CCNG2) from Homo sapiens (Human).